The sequence spans 400 residues: MAWRRREASVGARGVLALALLALALCVPGARGRALEWFSAVVNIEYVDPQTNLTVWSVSESGRFGDSSPKEGAHGLVGVPWAPGGDLEGCAPDTRFFVPEPGGRGAAPWVALVARGGCTFKDKVLVAARRNASAVVLYNEERYGNITLPMSHAGTGNIVVIMISYPKGREILELVQKGIPVTMTIGVGTRHVQEFISGQSVVFVAIAFITMMIISLAWLIFYYIQRFLYTGSQIGSQSHRKETKKVIGQLLLHTVKHGEKGIDVDAENCAVCIENFKVKDIIRILPCKHIFHRICIDPWLLDHRTCPMCKLDVIKALGYWGEPGDVQEMPAPESPPGRDPAANLSLALPDDDGSDDSSPPSASPAESEPQCDPSFKGDAGENTALLEAGRSDSRHGGPIS.

The first 32 residues, 1-32 (MAWRRREASVGARGVLALALLALALCVPGARG), serve as a signal peptide directing secretion. N-linked (GlcNAc...) asparagine glycosylation is found at asparagine 52 and asparagine 145. Positions 67 to 175 (SSPKEGAHGL…PKGREILELV (109 aa)) constitute a PA domain. A helical transmembrane segment spans residues 201 to 221 (VVFVAIAFITMMIISLAWLIF). The RING-type; atypical zinc-finger motif lies at 269-310 (CAVCIENFKVKDIIRILPCKHIFHRICIDPWLLDHRTCPMCK). The tract at residues 325-400 (DVQEMPAPES…SDSRHGGPIS (76 aa)) is disordered. Residue serine 345 is modified to Phosphoserine. Positions 356-368 (DSSPPSASPAESE) are enriched in low complexity. Basic and acidic residues predominate over residues 389-400 (GRSDSRHGGPIS).

The protein localises to the membrane. The catalysed reaction is S-ubiquitinyl-[E2 ubiquitin-conjugating enzyme]-L-cysteine + [acceptor protein]-L-lysine = [E2 ubiquitin-conjugating enzyme]-L-cysteine + N(6)-ubiquitinyl-[acceptor protein]-L-lysine.. It participates in protein modification; protein ubiquitination. Its function is as follows. E3 ubiquitin-protein ligase. Ubiquitinates BRAF, inducing its proteasomal degradation. The sequence is that of E3 ubiquitin-protein ligase RNF149 (RNF149) from Homo sapiens (Human).